We begin with the raw amino-acid sequence, 300 residues long: Homoserine kinase (300 aa).

R82–A92 lines the ATP pocket.

The protein belongs to the GHMP kinase family. Homoserine kinase subfamily.

It localises to the cytoplasm. It catalyses the reaction L-homoserine + ATP = O-phospho-L-homoserine + ADP + H(+). It functions in the pathway amino-acid biosynthesis; L-threonine biosynthesis; L-threonine from L-aspartate: step 4/5. Catalyzes the ATP-dependent phosphorylation of L-homoserine to L-homoserine phosphate. This chain is Homoserine kinase, found in Methanocella arvoryzae (strain DSM 22066 / NBRC 105507 / MRE50).